The chain runs to 258 residues: Trans-aconitate 2-methyltransferase (258 aa).

The protein belongs to the methyltransferase superfamily. Tam family.

The protein localises to the cytoplasm. The enzyme catalyses trans-aconitate + S-adenosyl-L-methionine = (E)-3-(methoxycarbonyl)pent-2-enedioate + S-adenosyl-L-homocysteine. Functionally, catalyzes the S-adenosylmethionine monomethyl esterification of trans-aconitate. This chain is Trans-aconitate 2-methyltransferase, found in Acidovorax ebreus (strain TPSY) (Diaphorobacter sp. (strain TPSY)).